The following is a 160-amino-acid chain: Eukaryotic translation initiation factor 5A-4 (160 aa).

Over residues 1 to 12 the composition is skewed to basic and acidic residues; the sequence is MSDEEHHFESKA. The disordered stretch occupies residues 1–21; it reads MSDEEHHFESKADAGASKTYP. Hypusine is present on Lys52.

It belongs to the eIF-5A family. In terms of processing, lys-52 undergoes hypusination, a unique post-translational modification that consists in the addition of a butylamino group from spermidine to lysine side chain, leading to the formation of the unusual amino acid hypusine. eIF-5As are the only known proteins to undergo this modification, which is essential for their function.

Functionally, translation factor that promotes translation elongation and termination, particularly upon ribosome stalling at specific amino acid sequence contexts. Binds between the exit (E) and peptidyl (P) site of the ribosome and promotes rescue of stalled ribosome: specifically required for efficient translation of polyproline-containing peptides as well as other motifs that stall the ribosome. Acts as a ribosome quality control (RQC) cofactor by joining the RQC complex to facilitate peptidyl transfer during CAT tailing step. The chain is Eukaryotic translation initiation factor 5A-4 from Solanum lycopersicum (Tomato).